Consider the following 479-residue polypeptide: Citrate synthase, mitochondrial (479 aa).

A mitochondrion-targeting transit peptide spans 1-37 (MSAILSTTSKSFLSRGSTRQCQNMQKALFALLNARHY). Catalysis depends on residues His312, His358, and Asp413. Ser462 carries the post-translational modification Phosphoserine.

It belongs to the citrate synthase family. As to quaternary structure, monomer and homodimer. Exists as an inactive monomer when phosphorylated. Homodimerization is dependent on dephosphorylation of Ser-462 by PTC7 and is required for activity. Phosphorylation at Ser-462. Dephosphorylated at Ser-462 by PTC7.

Its subcellular location is the mitochondrion matrix. The catalysed reaction is oxaloacetate + acetyl-CoA + H2O = citrate + CoA + H(+). It participates in carbohydrate metabolism; tricarboxylic acid cycle; isocitrate from oxaloacetate: step 1/2. Phosphorylation at Ser-462 inhibits catalytic activity. Dephosphorylation at Ser-462 by PTC7 enhances catalytic activity. Functionally, specific citrate synthase with catalytic activity only with acetyl-CoA. The chain is Citrate synthase, mitochondrial from Saccharomyces cerevisiae (strain ATCC 204508 / S288c) (Baker's yeast).